Consider the following 419-residue polypeptide: Tyrosine--tRNA ligase (419 aa).

Tyr-34 is a binding site for L-tyrosine. Residues 39-48 (PTADSLHLGH) carry the 'HIGH' region motif. Positions 169 and 173 each coordinate L-tyrosine. The short motif at 229–233 (KFGKS) is the 'KMSKS' region element. An ATP-binding site is contributed by Lys-232. In terms of domain architecture, S4 RNA-binding spans 352-419 (LNIIDLLVTS…KKKYFVLNFK (68 aa)).

It belongs to the class-I aminoacyl-tRNA synthetase family. TyrS type 1 subfamily. As to quaternary structure, homodimer.

The protein resides in the cytoplasm. It carries out the reaction tRNA(Tyr) + L-tyrosine + ATP = L-tyrosyl-tRNA(Tyr) + AMP + diphosphate + H(+). Catalyzes the attachment of tyrosine to tRNA(Tyr) in a two-step reaction: tyrosine is first activated by ATP to form Tyr-AMP and then transferred to the acceptor end of tRNA(Tyr). The polypeptide is Tyrosine--tRNA ligase (Streptococcus agalactiae serotype V (strain ATCC BAA-611 / 2603 V/R)).